The following is a 471-amino-acid chain: 3-isopropylmalate dehydratase large subunit (471 aa).

Cys-347, Cys-407, and Cys-410 together coordinate [4Fe-4S] cluster.

Belongs to the aconitase/IPM isomerase family. LeuC type 1 subfamily. In terms of assembly, heterodimer of LeuC and LeuD. The cofactor is [4Fe-4S] cluster.

It carries out the reaction (2R,3S)-3-isopropylmalate = (2S)-2-isopropylmalate. It functions in the pathway amino-acid biosynthesis; L-leucine biosynthesis; L-leucine from 3-methyl-2-oxobutanoate: step 2/4. In terms of biological role, catalyzes the isomerization between 2-isopropylmalate and 3-isopropylmalate, via the formation of 2-isopropylmaleate. The chain is 3-isopropylmalate dehydratase large subunit from Geobacillus sp. (strain WCH70).